Reading from the N-terminus, the 134-residue chain is Small ribosomal subunit protein uS9c (134 aa).

The protein belongs to the universal ribosomal protein uS9 family.

It localises to the plastid. The protein localises to the chloroplast. In Thalassiosira pseudonana (Marine diatom), this protein is Small ribosomal subunit protein uS9c (rps9).